A 69-amino-acid chain; its full sequence is Cytochrome c oxidase subunit 8A, mitochondrial (69 aa).

The N-terminal 25 residues, 1-25, are a transit peptide targeting the mitochondrion; it reads MSVLTPLLLRGLTGSARRLPVLRAQ. The short motif at 2–19 is the SIFI-degron element; that stretch reads SVLTPLLLRGLTGSARRL. Over 26-36 the chain is Mitochondrial matrix; the sequence is VHSKPPREKLG. Residues 37–60 traverse the membrane as a helical segment; that stretch reads TMDVAIGLTSCFVCFLLPSGWVLS. The Mitochondrial intermembrane segment spans residues 61–69; that stretch reads HLETYKKRE.

The protein belongs to the cytochrome c oxidase VIII family. Component of the cytochrome c oxidase (complex IV, CIV), a multisubunit enzyme composed of 14 subunits. The complex is composed of a catalytic core of 3 subunits MT-CO1, MT-CO2 and MT-CO3, encoded in the mitochondrial DNA, and 11 supernumerary subunits COX4I, COX5A, COX5B, COX6A, COX6B, COX6C, COX7A, COX7B, COX7C, COX8 and NDUFA4, which are encoded in the nuclear genome. The complex exists as a monomer or a dimer and forms supercomplexes (SCs) in the inner mitochondrial membrane with NADH-ubiquinone oxidoreductase (complex I, CI) and ubiquinol-cytochrome c oxidoreductase (cytochrome b-c1 complex, complex III, CIII), resulting in different assemblies (supercomplex SCI(1)III(2)IV(1) and megacomplex MCI(2)III(2)IV(2)). In response to mitochondrial stress, the precursor protein is ubiquitinated by the SIFI complex in the cytoplasm before mitochondrial import, leading to its degradation. Within the SIFI complex, UBR4 initiates ubiquitin chain that are further elongated or branched by KCMF1.

It localises to the mitochondrion inner membrane. The protein operates within energy metabolism; oxidative phosphorylation. Component of the cytochrome c oxidase, the last enzyme in the mitochondrial electron transport chain which drives oxidative phosphorylation. The respiratory chain contains 3 multisubunit complexes succinate dehydrogenase (complex II, CII), ubiquinol-cytochrome c oxidoreductase (cytochrome b-c1 complex, complex III, CIII) and cytochrome c oxidase (complex IV, CIV), that cooperate to transfer electrons derived from NADH and succinate to molecular oxygen, creating an electrochemical gradient over the inner membrane that drives transmembrane transport and the ATP synthase. Cytochrome c oxidase is the component of the respiratory chain that catalyzes the reduction of oxygen to water. Electrons originating from reduced cytochrome c in the intermembrane space (IMS) are transferred via the dinuclear copper A center (CU(A)) of subunit 2 and heme A of subunit 1 to the active site in subunit 1, a binuclear center (BNC) formed by heme A3 and copper B (CU(B)). The BNC reduces molecular oxygen to 2 water molecules using 4 electrons from cytochrome c in the IMS and 4 protons from the mitochondrial matrix. The chain is Cytochrome c oxidase subunit 8A, mitochondrial (COX8A) from Eulemur fulvus fulvus (Brown lemur).